The primary structure comprises 442 residues: tRNA modification GTPase MnmE (442 aa).

Residues arginine 24, glutamate 82, and lysine 122 each coordinate (6S)-5-formyl-5,6,7,8-tetrahydrofolate. The 148-residue stretch at 219–366 (GFKVALVGEP…LRRALKREIE (148 aa)) folds into the TrmE-type G domain. Asparagine 229 serves as a coordination point for K(+). GTP contacts are provided by residues 229–234 (NAGKST), 248–254 (TDIAGTT), and 273–276 (DTAG). Serine 233 contributes to the Mg(2+) binding site. K(+) contacts are provided by threonine 248, isoleucine 250, and threonine 253. Residue threonine 254 coordinates Mg(2+). Lysine 442 is a binding site for (6S)-5-formyl-5,6,7,8-tetrahydrofolate.

Belongs to the TRAFAC class TrmE-Era-EngA-EngB-Septin-like GTPase superfamily. TrmE GTPase family. Homodimer. Heterotetramer of two MnmE and two MnmG subunits. The cofactor is K(+).

The protein localises to the cytoplasm. In terms of biological role, exhibits a very high intrinsic GTPase hydrolysis rate. Involved in the addition of a carboxymethylaminomethyl (cmnm) group at the wobble position (U34) of certain tRNAs, forming tRNA-cmnm(5)s(2)U34. This is tRNA modification GTPase MnmE from Agrobacterium fabrum (strain C58 / ATCC 33970) (Agrobacterium tumefaciens (strain C58)).